Consider the following 205-residue polypeptide: Large ribosomal subunit protein uL4 (205 aa).

The disordered stretch occupies residues 43-97 (GKRQGTSKVKNRSAVRGGGKKPWRQKGTGRARQGSIRAPQWRGGGTVFGPTPRSY). Residues 51–71 (VKNRSAVRGGGKKPWRQKGTG) show a composition bias toward basic residues.

The protein belongs to the universal ribosomal protein uL4 family. As to quaternary structure, part of the 50S ribosomal subunit.

Its function is as follows. One of the primary rRNA binding proteins, this protein initially binds near the 5'-end of the 23S rRNA. It is important during the early stages of 50S assembly. It makes multiple contacts with different domains of the 23S rRNA in the assembled 50S subunit and ribosome. Forms part of the polypeptide exit tunnel. The polypeptide is Large ribosomal subunit protein uL4 (Lactobacillus acidophilus (strain ATCC 700396 / NCK56 / N2 / NCFM)).